Consider the following 347-residue polypeptide: Uroporphyrinogen decarboxylase (347 aa).

Residues 24–28 (RQAGR), Phe42, Asp73, Tyr150, Thr205, and His320 contribute to the substrate site.

It belongs to the uroporphyrinogen decarboxylase family. In terms of assembly, homodimer.

The protein localises to the cytoplasm. It catalyses the reaction uroporphyrinogen III + 4 H(+) = coproporphyrinogen III + 4 CO2. The protein operates within porphyrin-containing compound metabolism; protoporphyrin-IX biosynthesis; coproporphyrinogen-III from 5-aminolevulinate: step 4/4. Functionally, catalyzes the decarboxylation of four acetate groups of uroporphyrinogen-III to yield coproporphyrinogen-III. In Gloeobacter violaceus (strain ATCC 29082 / PCC 7421), this protein is Uroporphyrinogen decarboxylase.